Consider the following 372-residue polypeptide: Ligninase B (372 aa).

The N-terminal stretch at Met1–Ala21 is a signal peptide. A propeptide spanning residues Ala22–Arg28 is cleaved from the precursor. 4 disulfide bridges follow: Cys31–Cys43, Cys42–Cys313, Cys62–Cys148, and Cys277–Cys345. His75 (proton acceptor) is an active-site residue. Residues Asp76, Gly94, Asp96, and Ser98 each contribute to the Ca(2+) site. His204 contributes to the heme b binding site. 5 residues coordinate Ca(2+): Ser205, Asp222, Thr224, Ile227, and Asp229. An N-linked (GlcNAc...) asparagine glycan is attached at Asn285. Positions Phe350–Thr361 are enriched in low complexity. The disordered stretch occupies residues Phe350–Ala372.

This sequence belongs to the peroxidase family. Ligninase subfamily. Heme b is required as a cofactor. Requires Ca(2+) as cofactor.

It catalyses the reaction 1-(3,4-dimethoxyphenyl)-2-(2-methoxyphenoxy)propane-1,3-diol + H2O2 = 3,4-dimethoxybenzaldehyde + guaiacol + glycolaldehyde + H2O. The enzyme catalyses 2 (3,4-dimethoxyphenyl)methanol + H2O2 = 2 (3,4-dimethoxyphenyl)methanol radical + 2 H2O. It participates in secondary metabolite metabolism; lignin degradation. Its function is as follows. Depolymerization of lignin. Catalyzes the C(alpha)-C(beta) cleavage of the propyl side chains of lignin. The protein is Ligninase B (LIPB) of Phanerodontia chrysosporium (White-rot fungus).